We begin with the raw amino-acid sequence, 662 residues long: Protein-arginine deiminase type-1 (662 aa).

14 residues coordinate Ca(2+): N153, D155, D157, D164, D175, D178, Q350, E352, K363, D370, S371, N374, F408, and L411. The active-site Nucleophile is C644.

It belongs to the protein arginine deiminase family. In terms of assembly, monomer. Ca(2+) is required as a cofactor. As to expression, expressed only in the epidermis and uterus.

The protein localises to the cytoplasm. The catalysed reaction is L-arginyl-[protein] + H2O = L-citrullyl-[protein] + NH4(+). Functionally, catalyzes the deimination of arginine residues of proteins. This is Protein-arginine deiminase type-1 (Padi1) from Mus musculus (Mouse).